The primary structure comprises 214 residues: Orotate phosphoribosyltransferase (214 aa).

K26 contacts 5-phospho-alpha-D-ribose 1-diphosphate. Orotate is bound at residue 34-35 (FF). 5-phospho-alpha-D-ribose 1-diphosphate is bound by residues 72–73 (YK), R99, K100, K103, H105, and 124–132 (DDVITAGTA). Orotate contacts are provided by T128 and R156.

This sequence belongs to the purine/pyrimidine phosphoribosyltransferase family. PyrE subfamily. Homodimer. Requires Mg(2+) as cofactor.

It carries out the reaction orotidine 5'-phosphate + diphosphate = orotate + 5-phospho-alpha-D-ribose 1-diphosphate. Its pathway is pyrimidine metabolism; UMP biosynthesis via de novo pathway; UMP from orotate: step 1/2. Its function is as follows. Catalyzes the transfer of a ribosyl phosphate group from 5-phosphoribose 1-diphosphate to orotate, leading to the formation of orotidine monophosphate (OMP). The chain is Orotate phosphoribosyltransferase from Actinobacillus succinogenes (strain ATCC 55618 / DSM 22257 / CCUG 43843 / 130Z).